Here is a 238-residue protein sequence, read N- to C-terminus: Leucine-rich repeat-containing protein 57 (238 aa).

8 LRR repeats span residues 39-60 (NLRT…MGKF), 62-84 (LLKS…CKLK), 85-106 (KLET…FVQL), 108-129 (ALKT…LFKL), 131-152 (NLDV…VSGL), 153-175 (QAIE…SHCP), 176-196 (RLKV…PPSI), and 201-221 (QISL…RDLE).

The polypeptide is Leucine-rich repeat-containing protein 57 (lrrc57) (Xenopus laevis (African clawed frog)).